Here is a 443-residue protein sequence, read N- to C-terminus: Adenylyltransferase and sulfurtransferase UBA4 (443 aa).

Residues glycine 83, aspartate 104, 111–115 (SNLHR), lysine 128, and 172–173 (DT) each bind ATP. Zn(2+)-binding residues include cysteine 214 and cysteine 217. The active-site Glycyl thioester intermediate; for adenylyltransferase activity is the cysteine 231. Zn(2+) is bound by residues cysteine 292 and cysteine 295. Positions 343–441 (QSKAPVLLDV…WSDIVNPKFP (99 aa)) constitute a Rhodanese domain. Catalysis depends on cysteine 400, which acts as the Cysteine persulfide intermediate; for sulfurtransferase activity.

The protein in the N-terminal section; belongs to the HesA/MoeB/ThiF family. UBA4 subfamily. It depends on Zn(2+) as a cofactor.

It is found in the cytoplasm. The protein localises to the cytosol. It functions in the pathway tRNA modification; 5-methoxycarbonylmethyl-2-thiouridine-tRNA biosynthesis. In terms of biological role, plays a central role in 2-thiolation of mcm(5)S(2)U at tRNA wobble positions of cytosolic tRNA(Lys), tRNA(Glu) and tRNA(Gln). Acts by mediating the C-terminal thiocarboxylation of sulfur carrier URM1. Its N-terminus first activates URM1 as acyl-adenylate (-COAMP), then the persulfide sulfur on the catalytic cysteine is transferred to URM1 to form thiocarboxylation (-COSH) of its C-terminus. The reaction probably involves hydrogen sulfide that is generated from the persulfide intermediate and that acts as a nucleophile towards URM1. Subsequently, a transient disulfide bond is formed. Does not use thiosulfate as sulfur donor; NFS1 probably acting as a sulfur donor for thiocarboxylation reactions. Prior mcm(5) tRNA modification by the elongator complex is required for 2-thiolation. May also be involved in protein urmylation. The sequence is that of Adenylyltransferase and sulfurtransferase UBA4 from Scheffersomyces stipitis (strain ATCC 58785 / CBS 6054 / NBRC 10063 / NRRL Y-11545) (Yeast).